Consider the following 448-residue polypeptide: tRNA modification GTPase MnmE (448 aa).

(6S)-5-formyl-5,6,7,8-tetrahydrofolate-binding residues include R22, E79, and K118. The TrmE-type G domain maps to 214 to 371 (GLHVVLAGQP…LRQELLRIAG (158 aa)). Residue N224 coordinates K(+). Residues 224 to 229 (NVGKSS), 243 to 249 (TPIAGTT), and 268 to 271 (DTAG) each bind GTP. S228 contributes to the Mg(2+) binding site. T243, I245, and T248 together coordinate K(+). T249 serves as a coordination point for Mg(2+). Residue K448 participates in (6S)-5-formyl-5,6,7,8-tetrahydrofolate binding.

The protein belongs to the TRAFAC class TrmE-Era-EngA-EngB-Septin-like GTPase superfamily. TrmE GTPase family. In terms of assembly, homodimer. Heterotetramer of two MnmE and two MnmG subunits. K(+) is required as a cofactor.

Its subcellular location is the cytoplasm. Functionally, exhibits a very high intrinsic GTPase hydrolysis rate. Involved in the addition of a carboxymethylaminomethyl (cmnm) group at the wobble position (U34) of certain tRNAs, forming tRNA-cmnm(5)s(2)U34. In Dechloromonas aromatica (strain RCB), this protein is tRNA modification GTPase MnmE.